A 641-amino-acid polypeptide reads, in one-letter code: Fructose-1,6-bisphosphatase class 3 (641 aa).

This sequence belongs to the FBPase class 3 family. The cofactor is Mn(2+).

It catalyses the reaction beta-D-fructose 1,6-bisphosphate + H2O = beta-D-fructose 6-phosphate + phosphate. The protein operates within carbohydrate biosynthesis; gluconeogenesis. This chain is Fructose-1,6-bisphosphatase class 3, found in Bacillus velezensis (strain DSM 23117 / BGSC 10A6 / LMG 26770 / FZB42) (Bacillus amyloliquefaciens subsp. plantarum).